Reading from the N-terminus, the 262-residue chain is tRNA pseudouridine synthase A (262 aa).

The active-site Nucleophile is the Asp52. Tyr110 lines the substrate pocket.

Belongs to the tRNA pseudouridine synthase TruA family. Homodimer.

The catalysed reaction is uridine(38/39/40) in tRNA = pseudouridine(38/39/40) in tRNA. Functionally, formation of pseudouridine at positions 38, 39 and 40 in the anticodon stem and loop of transfer RNAs. The polypeptide is tRNA pseudouridine synthase A (Chromobacterium violaceum (strain ATCC 12472 / DSM 30191 / JCM 1249 / CCUG 213 / NBRC 12614 / NCIMB 9131 / NCTC 9757 / MK)).